The following is a 729-amino-acid chain: Zorya protein ZorA (729 aa).

The next 3 membrane-spanning stretches (helical) occupy residues 20–40, 135–155, and 177–197; these read PATV…FYFF, LPGI…MIGL, and VLYA…ITWL.

It belongs to the MotA family.

It is found in the cell inner membrane. Component of antiviral defense system Zorya type I, composed of ZorA, ZorB, ZorC and ZorD. Expression of Zorya type I in E.coli (strain MG1655) confers 10,000-fold resistance to phage SECphi27, 100-fold resistance to lambda, and 10-fold resistance to T7. While most T7 infected Zorya-containing cells undergo abortive infection, a minority produce viable phage progeny. These eventually accumulate to a high multiplicity of infection, leading to culture collapse by 2 hours after initial infection. ZorA and ZorB probably assemble in the cell inner membrane and exert their effect there. The protein is Zorya protein ZorA of Escherichia coli O139:H28 (strain E24377A / ETEC).